Reading from the N-terminus, the 536-residue chain is Probable cytochrome P450 12a5, mitochondrial (536 aa).

Cys482 provides a ligand contact to heme.

It belongs to the cytochrome P450 family. Heme is required as a cofactor.

The protein resides in the mitochondrion membrane. This Drosophila melanogaster (Fruit fly) protein is Probable cytochrome P450 12a5, mitochondrial (Cyp12a5).